A 101-amino-acid polypeptide reads, in one-letter code: Large ribosomal subunit protein P1 (101 aa).

Residues 61-72 show a composition bias toward low complexity; the sequence is AAPAAAAAPAAA. The disordered stretch occupies residues 61–101; that stretch reads AAPAAAAAPAAAEEAEEEAEEEEEEEEAEEEAAAGLGALFG. Residues 73–92 show a composition bias toward acidic residues; sequence EEAEEEAEEEEEEEEAEEEA.

This sequence belongs to the eukaryotic ribosomal protein P1/P2 family. As to quaternary structure, part of the 50S ribosomal subunit. Homodimer, it forms part of the ribosomal stalk which helps the ribosome interact with GTP-bound translation factors. Forms a heptameric uL10/P0(P1)2(P1)2(P1)2 complex, where uL10/P0 forms an elongated spine to which the P1 dimers bind in a sequential fashion.

Functionally, forms part of the ribosomal stalk, playing a central role in the interaction of the ribosome with GTP-bound translation factors. The chain is Large ribosomal subunit protein P1 from Methanothermobacter thermautotrophicus (strain ATCC 29096 / DSM 1053 / JCM 10044 / NBRC 100330 / Delta H) (Methanobacterium thermoautotrophicum).